The chain runs to 865 residues: MPNIIRKLVENDKKELKKLNKMALQVESFADEMEHLTDEQLKAKTPELKERIAKGESLDDLLYEAFAVCREAARRVLGLYPFHVQIMGGIVLHNGDVPEMRTGEGKTLTATMPVYLNALSGKGVHVVTVNEYLATRDMTEMGELYSWLGLTVGLNLNSKSPEEKREAYNCDITYSTSAELGFDYLRDNMVTRAVDMVQKPLNYALVDEVDSILVDEARTPLIISGQAESSSALYYRADQFTKTLKGQNLNVATSDYEEGDDYKIDLQSKTISLTEEGIDKAEKFFQIENLYDMENVALTHFVDNALRANFIMLHDIDYMVDENQEVLIIDQFTGRTMPGRRYSDGLHQAIEAKEAVPIQDESKTMASITIQNYFRMYKKLSGMTGTAKTEEEEFREIYNIQITPIPTNRPVQRLDHPDLLYPTLEAKFKAVIDDIKRRHAEGQPILIGTVAVETSELISKKLVEAKIPHEVLNAKNHFREAQIIMNAGQQGAVTIATNMAGRGTDIKLGPGVIDHADPEFRGLAVIGTERHESRRIDNQLRGRSGRQGDPGVSQFYLSLEDELMKRFGSERVSAFLDRMRISGEDAVIKSGLITRQIESSQKRVEGNNYDSRKQVLQYDDVIREQREVIYAQRQEVILTKEDMTPVLMGMFKRTIDRQVDGHELAGNLKDEETVKDLLQTVQNTMLPEEAIELSELTGLSGQAMKDLIFDKVKSRYASQMEKLADPERQLEFQRAVILRVVDNNWSEHIDALDQMRQSVGLRGYAQNNPIVEYQEESYKMYNNMIGAIEFEVTRLMMKAQIQPQTAIRQEAPRMTTTASQENITNVGPDTSVSEEISFENVGRNDPCPCGSGKKFKNCHGRTHIA.

Residues Gln85, Gly103–Thr107, and Asp505 contribute to the ATP site. Residues Cys847, Cys849, Cys858, and His859 each contribute to the Zn(2+) site.

This sequence belongs to the SecA family. As to quaternary structure, monomer and homodimer. Part of the essential Sec protein translocation apparatus which comprises SecA, SecYEG and auxiliary proteins SecDF. Other proteins may also be involved. Zn(2+) is required as a cofactor.

It is found in the cell membrane. Its subcellular location is the cytoplasm. It catalyses the reaction ATP + H2O + cellular proteinSide 1 = ADP + phosphate + cellular proteinSide 2.. In terms of biological role, part of the Sec protein translocase complex. Interacts with the SecYEG preprotein conducting channel. Has a central role in coupling the hydrolysis of ATP to the transfer of proteins into and across the cell membrane, serving as an ATP-driven molecular motor driving the stepwise translocation of polypeptide chains across the membrane. This is Protein translocase subunit SecA from Lactococcus lactis subsp. cremoris (strain SK11).